The chain runs to 328 residues: MNHMSDPTTVKVAVIGSGNIGTDLMIKVIRHSRVLEMGAMVGIDPDSDGLARARRLGVPTTSDGVEGLLALPGFADIEVIFDATSAKAHAANAALLQPLGKRLIDLTPAALGPFVVPAVNVDEHRDAPNVNMVTCGGQATIPIVAAVSRVAPVAYAEIVASIASKSAGPGTRANIDEFTETTAHAVETVGGARRGKAIIILNPAEPPLIMRDTVLCLATAPDPATRSAIRESIEEMVARVAGYVPGYRLKQQIQITEIPPDQPVHTLAADGGPAPTHQVSVFLEVEGAAHYLPSYAGNLDIMTSAALRYAESIAATVTAAPADQGATR.

Position 17–20 (17–20 (SGNI)) interacts with NAD(+). Cys-135 functions as the Acyl-thioester intermediate in the catalytic mechanism. Residues 166-174 (SAGPGTRAN) and Asn-298 each bind NAD(+).

The protein belongs to the acetaldehyde dehydrogenase family.

It carries out the reaction acetaldehyde + NAD(+) + CoA = acetyl-CoA + NADH + H(+). The polypeptide is Acetaldehyde dehydrogenase 3 (Nocardia farcinica (strain IFM 10152)).